We begin with the raw amino-acid sequence, 468 residues long: 3-isopropylmalate dehydratase large subunit (468 aa).

Residues C347, C407, and C410 each coordinate [4Fe-4S] cluster.

The protein belongs to the aconitase/IPM isomerase family. LeuC type 1 subfamily. As to quaternary structure, heterodimer of LeuC and LeuD. It depends on [4Fe-4S] cluster as a cofactor.

The enzyme catalyses (2R,3S)-3-isopropylmalate = (2S)-2-isopropylmalate. Its pathway is amino-acid biosynthesis; L-leucine biosynthesis; L-leucine from 3-methyl-2-oxobutanoate: step 2/4. Functionally, catalyzes the isomerization between 2-isopropylmalate and 3-isopropylmalate, via the formation of 2-isopropylmaleate. The polypeptide is 3-isopropylmalate dehydratase large subunit (Campylobacter jejuni (strain RM1221)).